We begin with the raw amino-acid sequence, 174 residues long: UPF0398 protein llmg_0513 (174 aa).

This sequence belongs to the UPF0398 family.

The chain is UPF0398 protein llmg_0513 from Lactococcus lactis subsp. cremoris (strain MG1363).